A 265-amino-acid chain; its full sequence is 5'-nucleotidase SurE (265 aa).

Positions 12, 13, 43, and 91 each coordinate a divalent metal cation.

This sequence belongs to the SurE nucleotidase family. A divalent metal cation is required as a cofactor.

The protein resides in the cytoplasm. The catalysed reaction is a ribonucleoside 5'-phosphate + H2O = a ribonucleoside + phosphate. In terms of biological role, nucleotidase that shows phosphatase activity on nucleoside 5'-monophosphates. The polypeptide is 5'-nucleotidase SurE (Haloquadratum walsbyi (strain DSM 16790 / HBSQ001)).